A 310-amino-acid polypeptide reads, in one-letter code: Lymphotoxin-beta (310 aa).

The Cytoplasmic segment spans residues 1–27; that stretch reads MGALGLQGRGGRPQGTGCLLLAVAGAT. The helical; Signal-anchor for type II membrane protein transmembrane segment at 28 to 48 threads the bilayer; that stretch reads SLVTLLLAVPITVLAVLALVP. Residues 49 to 310 lie on the Extracellular side of the membrane; it reads QEQGGLVMES…LGKCLHSANV (262 aa). Residues 67–86 form a disordered region; it reads QGLSKSNGLPSRLHSQIPSS. Positions 138 to 293 constitute a THD domain; sequence PAAHLIGAWM…GKTFFGAVMV (156 aa). N-linked (GlcNAc...) asparagine glycosylation occurs at N272.

It belongs to the tumor necrosis factor family. Heterotrimer of either two LTB and one LTA subunits or (less prevalent) two LTA and one LTB subunits.

The protein resides in the membrane. Its function is as follows. Cytokine that binds to LTBR/TNFRSF3. May play a specific role in immune response regulation. Provides the membrane anchor for the attachment of the heterotrimeric complex to the cell surface. The chain is Lymphotoxin-beta (LTB) from Marmota monax (Woodchuck).